Here is a 109-residue protein sequence, read N- to C-terminus: Flagellar hook-basal body complex protein FliE (109 aa).

The protein belongs to the FliE family.

The protein localises to the bacterial flagellum basal body. The chain is Flagellar hook-basal body complex protein FliE from Pseudomonas savastanoi pv. phaseolicola (strain 1448A / Race 6) (Pseudomonas syringae pv. phaseolicola (strain 1448A / Race 6)).